A 563-amino-acid polypeptide reads, in one-letter code: Arginine--tRNA ligase (563 aa).

The 'HIGH' region motif lies at 120-130 (PNIAKPFHIGH).

It belongs to the class-I aminoacyl-tRNA synthetase family. As to quaternary structure, monomer.

Its subcellular location is the cytoplasm. The enzyme catalyses tRNA(Arg) + L-arginine + ATP = L-arginyl-tRNA(Arg) + AMP + diphosphate. The protein is Arginine--tRNA ligase of Clostridium botulinum (strain ATCC 19397 / Type A).